We begin with the raw amino-acid sequence, 996 residues long: Disabled homolog 2-interacting protein (996 aa).

A C2 domain is found at 1–118; sequence MENLRRAVHP…AGRQFVEKWY (118 aa). One can recognise a Ras-GAP domain in the interval 194–402; sequence GKVKDFLTDL…TNMQRFLLEI (209 aa). Residues 453–750 form a necessary for interaction with AKT1 region; the sequence is LRDVHTALST…RTPPTMLSTL (298 aa). Residues 460 to 475 are compositionally biased toward polar residues; sequence LSTPGSGQLPGTNDLA. Disordered regions lie at residues 460 to 486 and 522 to 545; these read LSTPGSGQLPGTNDLASTPGSGSSSVS and RSSGVQPSPARSSSYSEANEPDLQ. Residues 476 to 486 are compositionally biased toward low complexity; the sequence is STPGSGSSSVS. Positions 522–538 are enriched in polar residues; the sequence is RSSGVQPSPARSSSYSE. Ser-535 bears the Phosphoserine; by MAP3K5 and RIPK1 mark. Ser-554 bears the Phosphoserine mark. Disordered regions lie at residues 611–630, 650–672, 702–805, 822–841, and 971–996; these read VPTPTTPGTSEGAPGRPQLL, PRGLGDSGSEGHSSLSSHSNSEE, SLTE…SPNA, EDEGLGPDPPHRDRLRSKEE, and RNGVSPTNPTKLQITENGEFRNSSNC. The span at 659–672 shows a compositional bias: low complexity; the sequence is EGHSSLSSHSNSEE. The span at 726–738 shows a compositional bias: pro residues; the sequence is QPPPPPPPPPPAP. 2 stretches are compositionally biased toward polar residues: residues 746–762 and 774–783; these read MLSTLQYPRPSSGTLAS and LRQQSSSSKG. A phosphoserine mark is found at Ser-785 and Ser-802. Residues 830–841 are compositionally biased toward basic and acidic residues; sequence PPHRDRLRSKEE. A coiled-coil region spans residues 832–966; that stretch reads HRDRLRSKEE…SALTQLKERY (135 aa). Residues 974 to 996 show a composition bias toward polar residues; sequence VSPTNPTKLQITENGEFRNSSNC.

On plasma membrane, exists in an inactive form complexed with TNFR1; in response to TNF-alpha, dissociates from TNFR1 complex, translocates to cytoplasm and forms part of an intracellular signaling complex comprising TRADD, RIPK1, TRAF2 and MAP3K5. Interacts (via NPXY motif) with DAB2 (via PID domain). Interacts (via PH domain) with ERN1. Part of a cytoplasmic complex made of HIPK1, DAB2IP and MAP3K5 in response to TNF-alpha; this complex formation promotes MAP3K5-JNK activation and subsequent apoptosis. Interacts (via N-terminal domain) with JAK2; the interaction occurs in a IFNG/IFN-gamma-dependent manner and inhibits JAK2 autophosphorylation activity. Interacts (via C2 domain) with GSK3B; the interaction stimulates GSK3B kinase activation. Interacts (via C2 domain) with PPP2CA. Interacts (via proline-rich motif) with a regulatory p85 subunit (via SH3 domain) of the PI3K complex; the interaction inhibits the PI3K-AKT complex activity in a TNF-alpha-dependent manner in prostate cancer (PCa) cells. Interacts with AKT1; the interaction is increased in a TNF-alpha-induced manner. Interacts (via C2 domain and active form preferentially) with KDR/VEGFR2 (tyrosine-phosphorylated active form preferentially); the interaction occurs at the late phase of VEGFA response and inhibits KDR/VEGFR2 activity. Interacts (via N-terminus C2 domain) with MAP3K5 ('Ser-966' dephosphorylated form preferentially); the interaction occurs in a TNF-alpha-induced manner. Interacts (via Ras-GAP domain) with the catalytic subunit of protein phosphatase PP2A; the interaction occurs in resting endothelial cells, is further enhanced by TNF-alpha stimulation and is required to bridge PP2A to MAP3K5. Interacts (via C-terminus PER domain) with TRAF2 (via zinc fingers); the interaction occurs in a TNF-alpha-dependent manner. Interacts with 14-3-3 proteins; the interaction occurs in a TNF-alpha-dependent manner. Interacts (via Ras-GAP domain) with RIPK1 (via kinase domain); the interaction occurs in a TNF-alpha-dependent manner. Interacts with DAB1 and DAB2. Interacts with RAB40C; acts as a GAP for RAB40C. Post-translationally, in response to TNF-alpha-induction, phosphorylated at Ser-535; phosphorylation leads to a conformational change, and thus, increases its association with 14-3-3 proteins, MAP3K5, RIPK1 and TRAF2 in endothelial cells; also stimulates regulatory p85 subunit sequestring and PI3K-p85 complex activity inhibition. As to expression, expressed in brain, lung, thymus, bladder and skeletal muscle. Up-regulatedd during prostate degeneration.

The protein localises to the cytoplasm. Its subcellular location is the cell membrane. It localises to the membrane. It is found in the cell projection. The protein resides in the dendrite. Functionally, functions as a scaffold protein implicated in the regulation of a large spectrum of both general and specialized signaling pathways. Involved in several processes such as innate immune response, inflammation and cell growth inhibition, apoptosis, cell survival, angiogenesis, cell migration and maturation. Also plays a role in cell cycle checkpoint control; reduces G1 phase cyclin levels resulting in G0/G1 cell cycle arrest. Mediates signal transduction by receptor-mediated inflammatory signals, such as the tumor necrosis factor (TNF), interferon (IFN) or lipopolysaccharide (LPS). Modulates the balance between phosphatidylinositol 3-kinase (PI3K)-AKT-mediated cell survival and apoptosis stimulated kinase (MAP3K5)-JNK signaling pathways; sequesters both AKT1 and MAP3K5 and counterbalances the activity of each kinase by modulating their phosphorylation status in response to pro-inflammatory stimuli. Acts as a regulator of the endoplasmic reticulum (ER) unfolded protein response (UPR) pathway; specifically involved in transduction of the ER stress-response to the JNK cascade through ERN1. Mediates TNF-alpha-induced apoptosis activation by facilitating dissociation of inhibitor 14-3-3 from MAP3K5; recruits the PP2A phosphatase complex which dephosphorylates MAP3K5 on 'Ser-966', leading to the dissociation of 13-3-3 proteins and activation of the MAP3K5-JNK signaling pathway in endothelial cells. Acts a negative regulator in the IFN-gamma-mediated JAK-STAT signaling cascade by inhibiting smooth muscle cell (VSMCs) proliferation and intimal expansion, and thus, prevents graft arteriosclerosis (GA). Acts as a GTPase-activating protein (GAP) for the ADP ribosylation factor 6 (ARF6). Promotes hydrolysis of the ARF6-bound GTP and thus, negatively regulates phosphatidylinositol 4,5-bisphosphate (PIP2)-dependent TLR4-TIRAP-MyD88 and NF-kappa-B signaling pathways in endothelial cells in response to lipopolysaccharides (LPS). Binds specifically to phosphatidylinositol 4-phosphate (PtdIns4P) and phosphatidylinositol 3-phosphate (PtdIns3P). In response to vascular endothelial growth factor (VEGFA), acts as a negative regulator of the VEGFR2-PI3K-mediated angiogenic signaling pathway by inhibiting endothelial cell migration and tube formation. In the developing brain, promotes both the transition from the multipolar to the bipolar stage and the radial migration of cortical neurons from the ventricular zone toward the superficial layer of the neocortex in a glial-dependent locomotion process. Probable downstream effector of the Reelin signaling pathway; promotes Purkinje cell (PC) dendrites development and formation of cerebellar synapses. Also functions as a tumor suppressor protein in prostate cancer progression; prevents cell proliferation and epithelial-to-mesenchymal transition (EMT) through activation of the glycogen synthase kinase-3 beta (GSK3B)-induced beta-catenin and inhibition of PI3K-AKT and Ras-MAPK survival downstream signaling cascades, respectively. Mediates TNF/TRAF2-induced MAP3K5-JNK activation, while it inhibits CHUK-NF-kappa-B signaling. Functions as a Ras GTPase-activating protein. May act as a tumor suppressor gene. This is Disabled homolog 2-interacting protein (Dab2ip) from Rattus norvegicus (Rat).